Reading from the N-terminus, the 322-residue chain is tRNA uridine(34) hydroxylase (322 aa).

The region spanning 125–219 (QSPDTVVIDA…YGKDPEVQGK (95 aa)) is the Rhodanese domain. Cys179 serves as the catalytic Cysteine persulfide intermediate.

Belongs to the TrhO family.

The catalysed reaction is uridine(34) in tRNA + AH2 + O2 = 5-hydroxyuridine(34) in tRNA + A + H2O. Catalyzes oxygen-dependent 5-hydroxyuridine (ho5U) modification at position 34 in tRNAs. This chain is tRNA uridine(34) hydroxylase, found in Bacillus pumilus (strain SAFR-032).